The primary structure comprises 83 residues: Small ribosomal subunit protein uS17 (83 aa).

Belongs to the universal ribosomal protein uS17 family. As to quaternary structure, part of the 30S ribosomal subunit.

One of the primary rRNA binding proteins, it binds specifically to the 5'-end of 16S ribosomal RNA. The chain is Small ribosomal subunit protein uS17 from Campylobacter hominis (strain ATCC BAA-381 / DSM 21671 / CCUG 45161 / LMG 19568 / NCTC 13146 / CH001A).